A 198-amino-acid polypeptide reads, in one-letter code: Dual specificity protein phosphatase 14 (198 aa).

In terms of domain architecture, Tyrosine-protein phosphatase spans 26–167 (GIAQITSSLF…LIDYESQLFG (142 aa)). The active-site Phosphocysteine intermediate is the Cys-111.

This sequence belongs to the protein-tyrosine phosphatase family. Non-receptor class dual specificity subfamily.

It catalyses the reaction O-phospho-L-tyrosyl-[protein] + H2O = L-tyrosyl-[protein] + phosphate. The catalysed reaction is O-phospho-L-seryl-[protein] + H2O = L-seryl-[protein] + phosphate. The enzyme catalyses O-phospho-L-threonyl-[protein] + H2O = L-threonyl-[protein] + phosphate. Its function is as follows. Involved in the inactivation of MAP kinases. Dephosphorylates ERK, JNK and p38 MAP-kinases. Plays a negative role in TCR signaling by dephosphorylating MAP3K7 adapter TAB1 leading to its inactivation. This chain is Dual specificity protein phosphatase 14 (Dusp14), found in Mus musculus (Mouse).